Here is a 241-residue protein sequence, read N- to C-terminus: Purine nucleoside phosphorylase DeoD-type 1 (241 aa).

Position 5 (histidine 5) interacts with a purine D-ribonucleoside. Residues glycine 21, arginine 25, arginine 44, and 88-91 (RVGS) each bind phosphate. A purine D-ribonucleoside-binding positions include 180 to 182 (EME) and 204 to 205 (SD). Aspartate 205 functions as the Proton donor in the catalytic mechanism.

This sequence belongs to the PNP/UDP phosphorylase family. Homohexamer; trimer of homodimers.

It catalyses the reaction a purine D-ribonucleoside + phosphate = a purine nucleobase + alpha-D-ribose 1-phosphate. The enzyme catalyses a purine 2'-deoxy-D-ribonucleoside + phosphate = a purine nucleobase + 2-deoxy-alpha-D-ribose 1-phosphate. Its function is as follows. Catalyzes the reversible phosphorolytic breakdown of the N-glycosidic bond in the beta-(deoxy)ribonucleoside molecules, with the formation of the corresponding free purine bases and pentose-1-phosphate. This Vibrio cholerae serotype O1 (strain ATCC 39315 / El Tor Inaba N16961) protein is Purine nucleoside phosphorylase DeoD-type 1.